The sequence spans 251 residues: Triosephosphate isomerase (251 aa).

8 to 10 (NWK) contacts substrate. Residue His97 is the Electrophile of the active site. The Proton acceptor role is filled by Glu170. Residues Gly176, Ser215, and 236 to 237 (GG) each bind substrate.

It belongs to the triosephosphate isomerase family. As to quaternary structure, homodimer.

It is found in the cytoplasm. The enzyme catalyses D-glyceraldehyde 3-phosphate = dihydroxyacetone phosphate. The protein operates within carbohydrate biosynthesis; gluconeogenesis. It participates in carbohydrate degradation; glycolysis; D-glyceraldehyde 3-phosphate from glycerone phosphate: step 1/1. In terms of biological role, involved in the gluconeogenesis. Catalyzes stereospecifically the conversion of dihydroxyacetone phosphate (DHAP) to D-glyceraldehyde-3-phosphate (G3P). The protein is Triosephosphate isomerase of Nitratidesulfovibrio vulgaris (strain DSM 19637 / Miyazaki F) (Desulfovibrio vulgaris).